The chain runs to 431 residues: Adenylosuccinate synthetase (431 aa).

Residues 12–18 (GDEGKGK) and 40–42 (GHT) contribute to the GTP site. Residue Asp-13 is the Proton acceptor of the active site. Residues Asp-13 and Gly-40 each contribute to the Mg(2+) site. Residues 13–16 (DEGK), 38–41 (NAGH), Thr-129, Arg-143, Gln-224, Thr-239, and Arg-303 each bind IMP. His-41 (proton donor) is an active-site residue. 299 to 305 (VTTGRAR) provides a ligand contact to substrate. Residues Arg-305, 331–333 (KLD), and 413–415 (GVG) each bind GTP.

The protein belongs to the adenylosuccinate synthetase family. As to quaternary structure, homodimer. Requires Mg(2+) as cofactor.

It is found in the cytoplasm. The catalysed reaction is IMP + L-aspartate + GTP = N(6)-(1,2-dicarboxyethyl)-AMP + GDP + phosphate + 2 H(+). Its pathway is purine metabolism; AMP biosynthesis via de novo pathway; AMP from IMP: step 1/2. In terms of biological role, plays an important role in the de novo pathway of purine nucleotide biosynthesis. Catalyzes the first committed step in the biosynthesis of AMP from IMP. In Mycobacterium sp. (strain KMS), this protein is Adenylosuccinate synthetase.